The primary structure comprises 914 residues: Golgin candidate 6 (914 aa).

Coiled coils occupy residues 723–837 and 863–901; these read IEKQ…SLKG and EDELNDLLVCLGQEESKVEKLSAKLIELGVDVDKLLEDI. Ser911 carries the phosphoserine modification.

It localises to the golgi apparatus. Its subcellular location is the golgi stack. Its function is as follows. Golgi matrix protein playing a role in tethering of vesicles to Golgi membranes and in maintaining the overall structure of the Golgi apparatus. Functions in the anterograde transport of storage protein precursors from the endoplasmic reticulum (ER) to the Golgi complex. This is Golgin candidate 6 (GC6) from Arabidopsis thaliana (Mouse-ear cress).